Consider the following 157-residue polypeptide: Glutamyl-tRNA(Gln) amidotransferase subunit C, mitochondrial (157 aa).

This sequence belongs to the GatC family. As to quaternary structure, subunit of the heterotrimeric GatCAB amidotransferase (AdT) complex, composed of A, B and C subunits.

The protein localises to the mitochondrion. It catalyses the reaction L-glutamyl-tRNA(Gln) + L-glutamine + ATP + H2O = L-glutaminyl-tRNA(Gln) + L-glutamate + ADP + phosphate + H(+). Its function is as follows. Allows the formation of correctly charged Gln-tRNA(Gln) through the transamidation of misacylated Glu-tRNA(Gln) in the mitochondria. The reaction takes place in the presence of glutamine and ATP through an activated gamma-phospho-Glu-tRNA(Gln). This Drosophila virilis (Fruit fly) protein is Glutamyl-tRNA(Gln) amidotransferase subunit C, mitochondrial.